The chain runs to 961 residues: Retinoblastoma-related protein 1 (961 aa).

The interval T404 to L606 is domain A. Positions T404 to P819 are pocket. The spacer stretch occupies residues A607–E728. A domain B region spans residues T729–P819. The tract at residues N829–S856 is disordered.

It belongs to the retinoblastoma protein (RB) family.

It localises to the nucleus. Functionally, regulator of biological processes that recruits a histone deacetylase to control gene transcription. May play a role in the entry into mitosis, negatively regulating the cell proliferation. Formation of stable complexes with geminiviridae replication-associated proteins may create a cellular environment which favors viral DNA replication. The protein is Retinoblastoma-related protein 1 (RB1) of Nicotiana tabacum (Common tobacco).